Reading from the N-terminus, the 655-residue chain is Alpha-amylase (655 aa).

Glutamate 123 acts as the Nucleophile in catalysis. Aspartate 214 serves as the catalytic Proton donor.

This sequence belongs to the glycosyl hydrolase 57 family.

The enzyme catalyses Endohydrolysis of (1-&gt;4)-alpha-D-glucosidic linkages in polysaccharides containing three or more (1-&gt;4)-alpha-linked D-glucose units.. This is Alpha-amylase (amyA) from Pyrococcus abyssi (strain GE5 / Orsay).